We begin with the raw amino-acid sequence, 257 residues long: Phosphate import ATP-binding protein PstB (257 aa).

An ABC transporter domain is found at 11 to 252 (IQVRNLNFYY…PAKKQTEDYI (242 aa)). 43–50 (GPSGCGKS) is a binding site for ATP.

It belongs to the ABC transporter superfamily. Phosphate importer (TC 3.A.1.7) family. In terms of assembly, the complex is composed of two ATP-binding proteins (PstB), two transmembrane proteins (PstC and PstA) and a solute-binding protein (PstS).

The protein localises to the cell inner membrane. The enzyme catalyses phosphate(out) + ATP + H2O = ADP + 2 phosphate(in) + H(+). Part of the ABC transporter complex PstSACB involved in phosphate import. Responsible for energy coupling to the transport system. This is Phosphate import ATP-binding protein PstB from Escherichia coli O6:K15:H31 (strain 536 / UPEC).